The sequence spans 6874 residues: Nesprin-2 (6874 aa).

The segment at 1–286 (MAASPVLPTE…MTYVAQFLKY (286 aa)) is actin-binding. Residues 1-6823 (MAASPVLPTE…RRSFLSRVIR (6823 aa)) are Cytoplasmic-facing. Calponin-homology (CH) domains lie at 31–136 (DTQK…LHFH) and 183–288 (WSAK…KYSK). 4 Spectrin repeats span residues 299–380 (AKVR…HQVA), 381–474 (AWRA…RINN), 475–577 (VLGK…QYIH), and 578–680 (NTKA…IQDQ). Residues 299-6767 (AKVRDALVWL…PDASLTSFDE (6469 aa)) adopt a coiled-coil conformation. Residues 675-723 (VKIQDQPPGNSSGTSLSKESAMAAEPGGSRGEDVKAAEKQEVEDEESAG) form a disordered region. Over residues 681–692 (PPGNSSGTSLSK) the composition is skewed to polar residues. A compositionally biased stretch (basic and acidic residues) spans 704-714 (RGEDVKAAEKQ). Spectrin repeat units follow at residues 727–834 (VNEE…KNLS), 835–928 (DEPL…LRHE), 929–1030 (ISLY…KCAS), 1120–1211 (TQRG…LLNT), 1262–1322 (DIRD…DALD), 1323–1409 (ALEG…QSKE), 1410–1514 (EGPP…ASVT), 1515–1626 (ESLE…KTEE), 1627–1728 (YGEN…AGGS), 1729–1820 (NSYA…TKKN), 1821–1928 (ALQD…AGEL), 1929–2026 (NNSF…EEED), 2027–2122 (KLPA…LANT), 2123–2233 (YLSH…SVQK), 2234–2350 (LEGH…LNSI), 2422–2503 (DERE…TLKK), 2504–2610 (TKER…KCFQ), 2611–2707 (QATE…EALE), 2708–2821 (PLNR…QLEL), 2822–2923 (KLEE…FLQN), 2924–3027 (NGSE…GKIK), 3028–3133 (QLDT…NMLL), 3134–3239 (ELQP…SLRA), 3240–3343 (DVLN…AQEA), 3344–3456 (EEER…QWGG), 3457–3563 (ELKR…TTRK), 3564–3669 (NKDL…SSEV), 3670–3767 (SKSS…ESRT), 3768–3870 (SQLN…QIME), 3871–3976 (ALPH…VTQE), and 3977–4074 (QNEL…KPSA). Positions 2338 to 2397 (SAKQETENGLNSILKSKSSTEKHVKFSLPVEEMPATSEVPKPTRESAAVGESGGARETNT) are disordered. Positions 2344–2354 (ENGLNSILKSK) are enriched in polar residues. 4 disordered regions span residues 4062–4152 (KQEQ…ATIV), 4171–4193 (APDS…TDEG), 4326–4348 (FSED…DQPA), and 4401–4429 (HQEN…DSTL). Residues 4081-4091 (VAERDASERKL) are compositionally biased toward basic and acidic residues. Residue Ser-4096 is modified to Phosphoserine. The segment covering 4110–4122 (SSVKSEDGRRRTE) has biased composition (basic and acidic residues). One copy of the Spectrin 36 repeat lies at 4218–4337 (RSRPRPADIL…EDQHPSTLKK (120 aa)). Over residues 4326 to 4345 (FSEDQHPSTLKKPSEPHDVD) the composition is skewed to basic and acidic residues. Positions 4409-4429 (RQSASSSKVPSPGNAASDSTL) are enriched in polar residues. Spectrin repeat units lie at residues 4507-4626 (SMTE…RSYQ), 4627-4714 (NEVK…RARY), 4715-4823 (LELS…QSML), 4824-4929 (QKWE…QTLL), 4930-5037 (KHLL…QEKL), 5038-5150 (HQLQ…KIQH), 5151-5252 (LEQL…SQVH), 5253-5377 (QLRA…KAPH), 5378-5473 (NAHA…MLLA), 5474-5576 (KSNE…YSEL), 5577-5691 (QGNG…QWRF), 5692-5786 (FTTS…LSLG), 5787-5894 (EVIS…RVAI), 5895-6004 (RKQE…VKKL), 6005-6122 (KETF…EETW), 6123-6230 (RLWQ…LRYF), and 6231-6342 (TNQR…PGLD). Positions 5435-5459 (NSTLSDQLPQPEERSTPGLHSGQRH) are disordered. Ser-5772 is subject to Phosphoserine. The interval 6336-6473 (SHTPGLDDEK…TEAPVPTDAS (138 aa)) is disordered. The span at 6341 to 6354 (LDDEKEASENETDI) shows a compositional bias: acidic residues. Ser-6348, Ser-6371, Ser-6400, Ser-6417, Ser-6418, Ser-6419, and Ser-6448 each carry phosphoserine. The segment covering 6355 to 6372 (EDPREIQADSWRKRRESE) has biased composition (basic and acidic residues). Spectrin repeat units lie at residues 6450 to 6534 (SHSK…KLRL), 6535 to 6650 (KQTV…QCQD), and 6651 to 6767 (FHQL…SFDE). The disordered stretch occupies residues 6790–6812 (EEEEEEEETDSRMPHLDSPGSSQ). In terms of domain architecture, KASH spans 6815 to 6874 (RSFLSRVIRAALPLQLLLLLLLLLACLLPASEDDYSCTQANNFARSFYPMLRYTNGPPPT). A helical; Anchor for type IV membrane protein membrane pass occupies residues 6824 to 6844 (AALPLQLLLLLLLLLACLLPA). The Perinuclear space segment spans residues 6845 to 6874 (SEDDYSCTQANNFARSFYPMLRYTNGPPPT). The tract at residues 6861–6874 (FYPMLRYTNGPPPT) is sufficient for interaction with SUN2.

This sequence belongs to the nesprin family. Core component of LINC complexes which are composed of inner nuclear membrane SUN domain-containing proteins coupled to outer nuclear membrane KASH domain-containing nesprins. SUN and KASH domain-containing proteins seem to bind each other promiscuously; however, some LINC complex constituents are tissue- or cell type-specific. At least SUN1/2-containing core LINC complexes are proposed to be hexameric composed of three protomers of each KASH and SUN domain-containing protein. The SUN2:SYNE2/KASH2 complex is a heterohexamer; the homotrimeric cloverleave-like conformation of the SUN domain is a prerequisite for LINC complex formation in which three separate SYNE2/KASH2 peptides bind at the interface of adjacent SUN domains. Interacts with EMD, LMNA, MKS3 and F-actin via its N-terminal domain. Interacts with DCTN1 and DYNC1I1/2; suggesting the association with the dynein-dynactin motor complex. Associates with kinesin motor complexes. Interacts with TMEM67. Interacts (via KASH domain) with TMEM258. Interacts with BROX; this interaction promotes SYN2 ubiquitination and facilitates the relaxation of mechanical stress imposed by compressive actin fibers at the rupture site. The disulfid bond with SUN2 is required for stability of the SUN2:SYNE2/KASH2 LINC complex under tensile forces though not required for the interaction. In terms of tissue distribution, C-terminal isoforms are highly expressed in the brain, hert and skeletal muscle. Isoform 1 (Nesprin-2 Giant) is most prevalent in the brain, skin, kidney and skeletal muscle.

It is found in the nucleus outer membrane. It localises to the sarcoplasmic reticulum membrane. Its subcellular location is the cell membrane. The protein localises to the cytoplasm. The protein resides in the cytoskeleton. It is found in the mitochondrion. It localises to the nucleus. Its subcellular location is the nucleoplasm. Multi-isomeric modular protein which forms a linking network between organelles and the actin cytoskeleton to maintain the subcellular spatial organization. As a component of the LINC (LInker of Nucleoskeleton and Cytoskeleton) complex involved in the connection between the nuclear lamina and the cytoskeleton. The nucleocytoplasmic interactions established by the LINC complex play an important role in the transmission of mechanical forces across the nuclear envelope and in nuclear movement and positioning. Specifically, SYNE2 and SUN2 assemble in arrays of transmembrane actin-associated nuclear (TAN) lines which are bound to F-actin cables and couple the nucleus to retrograde actin flow during actin-dependent nuclear movement. May be involved in nucleus-centrosome attachment. During interkinetic nuclear migration (INM) at G2 phase and nuclear migration in neural progenitors its LINC complex association with SUN1/2 and probable association with cytoplasmic dynein-dynactin motor complexes functions to pull the nucleus toward the centrosome; SYNE1 and SYNE2 seem to act redundantly in cerebellum, midbrain, brain stem, and other brain regions except cerebral cortex and hippocampus. During INM at G1 phase mediates respective LINC complex association with kinesin to push the nucleus away from the centrosome. Involved in nuclear migration in retinal photoreceptor progenitors. Required for centrosome migration to the apical cell surface during early ciliogenesis. In Mus musculus (Mouse), this protein is Nesprin-2.